We begin with the raw amino-acid sequence, 502 residues long: Probable cytosol aminopeptidase (502 aa).

The Mn(2+) site is built by Lys269 and Asp274. Residue Lys281 is part of the active site. Mn(2+) is bound by residues Asp292, Asp351, and Glu353. The active site involves Arg355.

The protein belongs to the peptidase M17 family. Mn(2+) serves as cofactor.

It localises to the cytoplasm. It catalyses the reaction Release of an N-terminal amino acid, Xaa-|-Yaa-, in which Xaa is preferably Leu, but may be other amino acids including Pro although not Arg or Lys, and Yaa may be Pro. Amino acid amides and methyl esters are also readily hydrolyzed, but rates on arylamides are exceedingly low.. The catalysed reaction is Release of an N-terminal amino acid, preferentially leucine, but not glutamic or aspartic acids.. Its function is as follows. Presumably involved in the processing and regular turnover of intracellular proteins. Catalyzes the removal of unsubstituted N-terminal amino acids from various peptides. In Shewanella loihica (strain ATCC BAA-1088 / PV-4), this protein is Probable cytosol aminopeptidase.